The sequence spans 613 residues: Ribosome-associated molecular chaperone SSB1 (613 aa).

The interval 1 to 391 (MAEGVFSGAI…ILTGSNLSDD (391 aa)) is nucleotide binding domain (NBD). Residues 16-18 (TTY), lysine 73, 205-207 (GGT), 271-278 (ERAKRTLS), and glycine 342 contribute to the ATP site. The inter-domain linker stretch occupies residues 392–402 (TKDLLLLDVAP). The substrate binding domain (SBD) stretch occupies residues 403-613 (LSLGVAMQGD…RVVTKAMATR (211 aa)). The tract at residues 516-612 (SEDIEKMVSQ…KRVVTKAMAT (97 aa)) is lid domain (SBDalpha). The short motif at 574-582 (VEAALADAF) is the Nuclear export signal element.

Belongs to the heat shock protein 70 family. Ssb-type Hsp70 subfamily. In terms of assembly, binds to ribosomes. Binds close to the ribosomal tunnel exit via contacts with both ribosomal proteins and rRNA. Directly interacts with nascent polypeptides. This interaction is dependent on the ribosome-associated complex (RAC). Interacts with SSE1. Interacts with FES1.

It localises to the cytoplasm. The catalysed reaction is ATP + H2O = ADP + phosphate + H(+). In terms of biological role, ribosome-bound, Hsp70-type chaperone that assists in the cotranslational folding of newly synthesized proteins in the cytosol. Stimulates folding by interacting with nascent chains, binding to short, largely hydrophobic sequences exposed by unfolded proteins, thereby stabilizing longer, more slowly translated, and aggregation-prone nascent polypeptides and domains that cannot fold stably until fully synthesized. The Hsp70-protein substrate interaction depends on ATP-binding and on allosteric regulation between the NBD and the SBD. The ATP-bound state is characterized by a fast exchange rate of substrate (low affinity state), while in the ADP-bound state exchange is much slower (high affinity state). During the Hsp70 cycle, the chaperone switches between the ATP-bound state (open conformation) and the ADP-bound state (closed conformation) by major conformational rearrangements involving mainly the lid domain. Ssb cooperates with a specific Hsp40/Hsp70 co-chaperone termed the ribosome-associated complex (RAC), which stimulates the ATPase activity of the ribosome-associated pool of Ssbs and switches it to the high affinity substrate binding state. Hsp110 chaperone SSE1 and FES1 act as nucleotide exchange factors that cause substrate release. This Eremothecium gossypii (strain ATCC 10895 / CBS 109.51 / FGSC 9923 / NRRL Y-1056) (Yeast) protein is Ribosome-associated molecular chaperone SSB1 (SSB1).